Reading from the N-terminus, the 488-residue chain is Palmitoyltransferase ZDHHC14 (488 aa).

At 1–60 the chain is on the cytoplasmic side; sequence MPPGGGGPMKDCEYSQISTHSSSPMESPHKKKKIAARRKWEVFPGRNKFFCNGRIMMARQ. The helical transmembrane segment at 61-81 threads the bilayer; the sequence is TGVFYLTLVLILVTSGLFFAF. Residues 82-89 are Lumenal-facing; the sequence is DCPYLAVK. The chain crosses the membrane as a helical span at residues 90–110; it reads ITPAIPAVAGILFFFVMGTLL. Over 111 to 208 the chain is Cytoplasmic; it reads RTSFSDPGVL…GNCVGKRNYR (98 aa). The region spanning 165–215 is the DHHC domain; it reads KYCFTCKIFRPPRASHCSLCDNCVERFDHHCPWVGNCVGKRNYRFFYMFIL. Cys195 serves as the catalytic S-palmitoyl cysteine intermediate. The chain crosses the membrane as a helical span at residues 209–229; the sequence is FFYMFILSLSFLTVFIFAFVI. The Lumenal portion of the chain corresponds to 230–255; the sequence is THVILRSQQTGFLNALKDSPASVLEA. Residues 256–276 traverse the membrane as a helical segment; sequence VVCFFSVWSIVGLSGFHTYLI. The Cytoplasmic portion of the chain corresponds to 277 to 488; it reads SSNQTTNEDI…VRGLVKLSSV (212 aa). Ser455 is modified (phosphoserine).

The protein belongs to the DHHC palmitoyltransferase family. ERF2/ZDHHC9 subfamily. Widely expressed.

It localises to the endoplasmic reticulum membrane. It is found in the golgi apparatus. The protein resides in the golgi stack membrane. The catalysed reaction is L-cysteinyl-[protein] + hexadecanoyl-CoA = S-hexadecanoyl-L-cysteinyl-[protein] + CoA. Functionally, palmitoyltransferase that could catalyze the addition of palmitate onto various protein substrates. May have a palmitoyltransferase activity toward the beta-2 adrenergic receptor/ADRB2 and thereby regulate G protein-coupled receptor signaling. May play a role in cell differentiation and apoptosis. This chain is Palmitoyltransferase ZDHHC14, found in Homo sapiens (Human).